Consider the following 98-residue polypeptide: Large ribosomal subunit protein uL23 (98 aa).

The protein belongs to the universal ribosomal protein uL23 family. In terms of assembly, part of the 50S ribosomal subunit. Contacts protein L29, and trigger factor when it is bound to the ribosome.

One of the early assembly proteins it binds 23S rRNA. One of the proteins that surrounds the polypeptide exit tunnel on the outside of the ribosome. Forms the main docking site for trigger factor binding to the ribosome. This is Large ribosomal subunit protein uL23 from Streptococcus sanguinis (strain SK36).